Consider the following 332-residue polypeptide: Beta-hexosaminidase (332 aa).

Residues Asp-62, Arg-70, Arg-131, and 161–162 (KH) contribute to the substrate site. The active-site Proton donor/acceptor is His-174. Catalysis depends on Asp-244, which acts as the Nucleophile.

This sequence belongs to the glycosyl hydrolase 3 family. NagZ subfamily.

The protein localises to the cytoplasm. The catalysed reaction is Hydrolysis of terminal non-reducing N-acetyl-D-hexosamine residues in N-acetyl-beta-D-hexosaminides.. It functions in the pathway cell wall biogenesis; peptidoglycan recycling. Functionally, plays a role in peptidoglycan recycling by cleaving the terminal beta-1,4-linked N-acetylglucosamine (GlcNAc) from peptide-linked peptidoglycan fragments, giving rise to free GlcNAc, anhydro-N-acetylmuramic acid and anhydro-N-acetylmuramic acid-linked peptides. The protein is Beta-hexosaminidase of Pseudomonas aeruginosa (strain LESB58).